The sequence spans 238 residues: Ribonuclease PH (238 aa).

Residues arginine 86 and 124–126 contribute to the phosphate site; that span reads GTR.

The protein belongs to the RNase PH family. In terms of assembly, homohexameric ring arranged as a trimer of dimers.

It carries out the reaction tRNA(n+1) + phosphate = tRNA(n) + a ribonucleoside 5'-diphosphate. Functionally, phosphorolytic 3'-5' exoribonuclease that plays an important role in tRNA 3'-end maturation. Removes nucleotide residues following the 3'-CCA terminus of tRNAs; can also add nucleotides to the ends of RNA molecules by using nucleoside diphosphates as substrates, but this may not be physiologically important. Probably plays a role in initiation of 16S rRNA degradation (leading to ribosome degradation) during starvation. This is Ribonuclease PH from Geotalea daltonii (strain DSM 22248 / JCM 15807 / FRC-32) (Geobacter daltonii).